A 136-amino-acid chain; its full sequence is Nucleoside diphosphate kinase (136 aa).

ATP contacts are provided by lysine 10, phenylalanine 58, arginine 86, threonine 92, arginine 104, and asparagine 114. Histidine 117 acts as the Pros-phosphohistidine intermediate in catalysis.

The protein belongs to the NDK family. In terms of assembly, homotetramer. Mg(2+) serves as cofactor.

Its subcellular location is the cytoplasm. The enzyme catalyses a 2'-deoxyribonucleoside 5'-diphosphate + ATP = a 2'-deoxyribonucleoside 5'-triphosphate + ADP. It catalyses the reaction a ribonucleoside 5'-diphosphate + ATP = a ribonucleoside 5'-triphosphate + ADP. Major role in the synthesis of nucleoside triphosphates other than ATP. The ATP gamma phosphate is transferred to the NDP beta phosphate via a ping-pong mechanism, using a phosphorylated active-site intermediate. The polypeptide is Nucleoside diphosphate kinase (Corynebacterium diphtheriae (strain ATCC 700971 / NCTC 13129 / Biotype gravis)).